The sequence spans 302 residues: MLAEALPWLQHFRDKIVVVKYGGNAMVDDSLKAAFAADMVFLRTVGAKPVVVHGGGPQISDMLRRVGLEGEFKGGFRVTTPEVMEIVRMVLFGQVGRDLVGLINSHGPYAVGTSGEDAGLFTAEKRLVDIDGTPTDIGLVGNIVNVDATSLMDLIDAGRIPVVSTIAPGADGQVYNINADTAAGALASAIGAERLLVLTNVEGLYTDWPNKSSLVSKIVASELDAILPGLDAGMIPKMESCLNAVRGGVNAAHVIDGRIAHSVLLELLTMGGIGTMVLPDNYAREDYPEGTVFRKNYQDGHA.

Residues 55-56 (GG), R77, and N176 contribute to the substrate site.

Belongs to the acetylglutamate kinase family. ArgB subfamily.

It is found in the cytoplasm. The enzyme catalyses N-acetyl-L-glutamate + ATP = N-acetyl-L-glutamyl 5-phosphate + ADP. It participates in amino-acid biosynthesis; L-arginine biosynthesis; N(2)-acetyl-L-ornithine from L-glutamate: step 2/4. Catalyzes the ATP-dependent phosphorylation of N-acetyl-L-glutamate. The polypeptide is Acetylglutamate kinase (Corynebacterium efficiens (strain DSM 44549 / YS-314 / AJ 12310 / JCM 11189 / NBRC 100395)).